The sequence spans 503 residues: Maturase K (503 aa).

It belongs to the intron maturase 2 family. MatK subfamily.

The protein localises to the plastid. The protein resides in the chloroplast. In terms of biological role, usually encoded in the trnK tRNA gene intron. Probably assists in splicing its own and other chloroplast group II introns. This is Maturase K from Eucalyptus globulus (Tasmanian blue gum).